The primary structure comprises 452 residues: Ribosomal protein uS12 methylthiotransferase RimO (452 aa).

The MTTase N-terminal domain maps to 8–123; it reads PRVGFVSLGC…VMQAVHTHLP (116 aa). 6 residues coordinate [4Fe-4S] cluster: cysteine 17, cysteine 53, cysteine 82, cysteine 154, cysteine 158, and cysteine 161. Residues 140–381 enclose the Radical SAM core domain; the sequence is LTPKHYAYLK…MEVAEEVSAR (242 aa). A TRAM domain is found at 384–452; sequence QRKVGQTLRV…ADGHDLWGEI (69 aa).

It belongs to the methylthiotransferase family. RimO subfamily. [4Fe-4S] cluster is required as a cofactor.

The protein resides in the cytoplasm. It carries out the reaction L-aspartate(89)-[ribosomal protein uS12]-hydrogen + (sulfur carrier)-SH + AH2 + 2 S-adenosyl-L-methionine = 3-methylsulfanyl-L-aspartate(89)-[ribosomal protein uS12]-hydrogen + (sulfur carrier)-H + 5'-deoxyadenosine + L-methionine + A + S-adenosyl-L-homocysteine + 2 H(+). Functionally, catalyzes the methylthiolation of an aspartic acid residue of ribosomal protein uS12. The sequence is that of Ribosomal protein uS12 methylthiotransferase RimO from Cupriavidus pinatubonensis (strain JMP 134 / LMG 1197) (Cupriavidus necator (strain JMP 134)).